Reading from the N-terminus, the 938-residue chain is Bifunctional glutamine synthetase adenylyltransferase/adenylyl-removing enzyme (938 aa).

Positions 1 to 457 (MLEADAARLK…HFDHVFGDPS (457 aa)) are adenylyl removase. Residues 460–938 (AHTLDSMWAA…ALWTIVFGSA (479 aa)) form an adenylyl transferase region.

It belongs to the GlnE family. The cofactor is Mg(2+).

The catalysed reaction is [glutamine synthetase]-O(4)-(5'-adenylyl)-L-tyrosine + phosphate = [glutamine synthetase]-L-tyrosine + ADP. The enzyme catalyses [glutamine synthetase]-L-tyrosine + ATP = [glutamine synthetase]-O(4)-(5'-adenylyl)-L-tyrosine + diphosphate. Functionally, involved in the regulation of glutamine synthetase GlnA, a key enzyme in the process to assimilate ammonia. When cellular nitrogen levels are high, the C-terminal adenylyl transferase (AT) inactivates GlnA by covalent transfer of an adenylyl group from ATP to specific tyrosine residue of GlnA, thus reducing its activity. Conversely, when nitrogen levels are low, the N-terminal adenylyl removase (AR) activates GlnA by removing the adenylyl group by phosphorolysis, increasing its activity. The regulatory region of GlnE binds the signal transduction protein PII (GlnB) which indicates the nitrogen status of the cell. The chain is Bifunctional glutamine synthetase adenylyltransferase/adenylyl-removing enzyme from Aromatoleum aromaticum (strain DSM 19018 / LMG 30748 / EbN1) (Azoarcus sp. (strain EbN1)).